A 173-amino-acid polypeptide reads, in one-letter code: UPF0316 protein Bsph_0745 (173 aa).

The next 3 helical transmembrane spans lie at 4–24, 31–51, and 58–78; these read IVLILILQLVYVPFLTLRTIF, FLAAIFGMLEMLVYVFGLSLV, and MLAMVVYAVGFGLGIFLGAKI.

It belongs to the UPF0316 family.

It localises to the cell membrane. The sequence is that of UPF0316 protein Bsph_0745 from Lysinibacillus sphaericus (strain C3-41).